The following is a 233-amino-acid chain: Ribosomal RNA small subunit methyltransferase G (233 aa).

S-adenosyl-L-methionine-binding positions include G96, L101, 146–147, and R160; that span reads LE.

The protein belongs to the methyltransferase superfamily. RNA methyltransferase RsmG family.

The protein resides in the cytoplasm. The enzyme catalyses guanosine(527) in 16S rRNA + S-adenosyl-L-methionine = N(7)-methylguanosine(527) in 16S rRNA + S-adenosyl-L-homocysteine. In terms of biological role, specifically methylates the N7 position of guanine in position 527 of 16S rRNA. In Sphingopyxis alaskensis (strain DSM 13593 / LMG 18877 / RB2256) (Sphingomonas alaskensis), this protein is Ribosomal RNA small subunit methyltransferase G.